We begin with the raw amino-acid sequence, 75 residues long: 8.9 kDa basic protein (75 aa).

The protein is 8.9 kDa basic protein (P8.9) of Orgyia pseudotsugata (Douglas-fir tussock moth).